The primary structure comprises 404 residues: AT-hook motif nuclear-localized protein 3 (404 aa).

3 disordered regions span residues 1–51, 70–100, and 113–133; these read MEER…VPPT, PFSL…PDGT, and SVPL…GKSN. Polar residues predominate over residues 7 to 19; it reads TNINNNITSSFGL. Positions 35–51 are enriched in pro residues; the sequence is DPPPRPENPNPFLVPPT. A compositionally biased stretch (polar residues) spans 71-83; the sequence is FSLTMPTENTSAE. Positions 86–94 match the Bipartite nuclear localization signal motif; the sequence is KKKRGRPRK. The a.T hook DNA-binding region spans 86–98; that stretch reads KKKRGRPRKYNPD. Positions 123–133 are enriched in basic residues; it reads RKRGRGRGKSN. Residues 163–308 enclose the PPC domain; it reads GANFTPHVLI…RFGAQPSSIS (146 aa). The disordered stretch occupies residues 359 to 404; that stretch reads PFSSIPVGGGGGGEVGEEEGEEDDDELEGEDEEFGGDSQSDNEIPS. Acidic residues predominate over residues 373 to 393; sequence VGEEEGEEDDDELEGEDEEFG.

As to quaternary structure, homodimer. Interacts with AHL4. Expressed in both procambium and xylem precursors of the root meristem. Also detected in the endodermis in the late elongation zone and onwards.

Its subcellular location is the nucleus. Functionally, transcription factor that specifically binds AT-rich DNA sequences related to the nuclear matrix attachment regions (MARs). Acts redundantly with AHL4 to regulate the formation of tissue boundary between the xylem and procambium in the root meristem. The polypeptide is AT-hook motif nuclear-localized protein 3 (Arabidopsis thaliana (Mouse-ear cress)).